Consider the following 298-residue polypeptide: Protease HtpX homolog (298 aa).

The next 2 helical transmembrane spans lie at 16–36 and 38–58; these read VMFG…YLFW and SWVS…LIMI. His144 contributes to the Zn(2+) binding site. Glu145 is a catalytic residue. A Zn(2+)-binding site is contributed by His148. Helical transmembrane passes span 159–179 and 197–217; these read IALA…NWFW and IIGL…ASIA. Glu226 is a binding site for Zn(2+).

The protein belongs to the peptidase M48B family. Zn(2+) serves as cofactor.

Its subcellular location is the cell membrane. The chain is Protease HtpX homolog from Levilactobacillus brevis (strain ATCC 367 / BCRC 12310 / CIP 105137 / JCM 1170 / LMG 11437 / NCIMB 947 / NCTC 947) (Lactobacillus brevis).